The chain runs to 530 residues: Cation transporter HKT2;2 (530 aa).

The Cytoplasmic segment spans residues 1–40 (MTSIYQEFIHTKCQSFRSIGRYVLHSIVLIYRFVSLHVHP). A run of 2 helical transmembrane segments spans residues 41–61 (FWIQ…LLMF) and 102–122 (IVVL…FLGL). The Cytoplasmic portion of the chain corresponds to 123-186 (MLRLKHKHNP…DLKRSKRLRW (64 aa)). 2 helical membrane-spanning segments follow: residues 187–207 (FLGF…FLLV) and 260–280 (GLLL…PLFL). Residues 281–317 (RILIWFLGKVTKLKDLKLMIKNSDELQYDYLLPKLPT) lie on the Cytoplasmic side of the membrane. The next 2 helical transmembrane spans lie at 318–338 (AFLA…FGSV) and 372–392 (IDCS…MYLP). Over 393-420 (PSTTFALSNGDEKTANKKAKRKLGLVVR) the chain is Cytoplasmic. Helical transmembrane passes span 421 to 441 (NLAF…LITE) and 494 to 514 (SLSG…MLYG). Topologically, residues 515 to 530 (RLKAFTKGTGEYWRLW) are cytoplasmic.

The protein belongs to the TrkH potassium transport family. HKT (TC 2.A.38.3) subfamily.

The protein localises to the membrane. Its function is as follows. Seems to be involved in regulation of potassium-sodium homeostasis. Seems to act as a potassium-sodium cotransporter, which mediates increased potassium uptake under external sodium accumulation and contributes to salt-tolerance in cultivar indica Pokkali. The chain is Cation transporter HKT2;2 from Oryza sativa subsp. indica (Rice).